The primary structure comprises 681 residues: Proline-rich receptor-like protein kinase PERK8 (681 aa).

The span at 1-11 (MSLVPPLPILS) shows a compositional bias: pro residues. The interval 1–231 (MSLVPPLPIL…TLPSSSPGKS (231 aa)) is disordered. At 1–237 (MSLVPPLPIL…PGKSEVGTGG (237 aa)) the chain is on the extracellular side. An N-linked (GlcNAc...) asparagine glycan is attached at N16. Over residues 21 to 163 (APPPLQTQPT…SPPKPSPSTP (143 aa)) the composition is skewed to pro residues. Over residues 177-191 (TSASPPSSNPTDPST) the composition is skewed to low complexity. Residues 192 to 201 (LAPPPTPLPV) are compositionally biased toward pro residues. A compositionally biased stretch (polar residues) spans 214 to 229 (PASNNGNNTLPSSSPG). N-linked (GlcNAc...) asparagine glycosylation is present at N220. Residues 238 to 258 (IVAIGVIVGLVFLSLFVMGVW) form a helical membrane-spanning segment. Topologically, residues 259–681 (FTRKRKRKDP…GSRDQSRFVP (423 aa)) are cytoplasmic. The 279-residue stretch at 339–617 (FSEKNLLGEG…SQVVRALDTL (279 aa)) folds into the Protein kinase domain. ATP contacts are provided by residues 345-353 (LGEGGFGCV) and K367. Y412 is modified (phosphotyrosine). The active-site Proton acceptor is the D463. A phosphoserine mark is found at S467 and S498. A phosphothreonine mark is found at T499 and T504. At Y512 the chain carries Phosphotyrosine.

This sequence belongs to the protein kinase superfamily. Ser/Thr protein kinase family. In terms of assembly, interacts with KIPK1 and KIPK2 (via its cytosolic domain). In terms of tissue distribution, mostly expressed in seedlings, roots, inflorescence bolts and flower buds.

The protein localises to the cell membrane. It catalyses the reaction L-seryl-[protein] + ATP = O-phospho-L-seryl-[protein] + ADP + H(+). It carries out the reaction L-threonyl-[protein] + ATP = O-phospho-L-threonyl-[protein] + ADP + H(+). Could be involved in the negative regulation of root growth. In Arabidopsis thaliana (Mouse-ear cress), this protein is Proline-rich receptor-like protein kinase PERK8 (PERK8).